Consider the following 529-residue polypeptide: Bifunctional purine biosynthesis protein PurH (529 aa).

The MGS-like domain occupies 1 to 148 (MQQRRPVRRA…KNHKDVAIVV (148 aa)).

It belongs to the PurH family.

It carries out the reaction (6R)-10-formyltetrahydrofolate + 5-amino-1-(5-phospho-beta-D-ribosyl)imidazole-4-carboxamide = 5-formamido-1-(5-phospho-D-ribosyl)imidazole-4-carboxamide + (6S)-5,6,7,8-tetrahydrofolate. The catalysed reaction is IMP + H2O = 5-formamido-1-(5-phospho-D-ribosyl)imidazole-4-carboxamide. Its pathway is purine metabolism; IMP biosynthesis via de novo pathway; 5-formamido-1-(5-phospho-D-ribosyl)imidazole-4-carboxamide from 5-amino-1-(5-phospho-D-ribosyl)imidazole-4-carboxamide (10-formyl THF route): step 1/1. It participates in purine metabolism; IMP biosynthesis via de novo pathway; IMP from 5-formamido-1-(5-phospho-D-ribosyl)imidazole-4-carboxamide: step 1/1. The chain is Bifunctional purine biosynthesis protein PurH from Citrobacter koseri (strain ATCC BAA-895 / CDC 4225-83 / SGSC4696).